The primary structure comprises 352 residues: C-C chemokine receptor type 5 (352 aa).

The Extracellular segment spans residues 1–30 (MDYQVSSPTYDIDYYTSEPCQKINVKQIAA). Position 3 is a sulfotyrosine (Y3). O-linked (GalNAc...) serine glycosylation is found at S6 and S7. Sulfotyrosine occurs at positions 10, 14, and 15. 2 disulfides stabilise this stretch: C20/C269 and C101/C178. Residues 31–58 (RLLPPLYSLVFIFGFVGNILVVLILINC) traverse the membrane as a helical segment. The Cytoplasmic segment spans residues 59–68 (KRLKSMTDIY). The helical transmembrane segment at 69-89 (LLNLAISDLLFLLTVPFWAHY) threads the bilayer. Over 90-102 (AAAQWDFGNTMCQ) the chain is Extracellular. Residues 103–124 (LLTGLYFIGFFSGIFFIILLTI) form a helical membrane-spanning segment. Topologically, residues 125–141 (DRYLAIVHAVFALKART) are cytoplasmic. Residues 142–166 (VTFGVVTSVITWVVAVFASLPRIIF) form a helical membrane-spanning segment. The Extracellular segment spans residues 167-198 (TTSHRERLHYTCSSHFPYSQYQFWKNFHTLKI). Residues 199 to 218 (VILGLVLPLLVMVICYSGIL) form a helical membrane-spanning segment. Over 219-235 (KTLLRCRNEKKRHRAVR) the chain is Cytoplasmic. A helical membrane pass occupies residues 236-260 (LIFTIMIVYFLFWAPYNIVLLLNTF). Over 261–277 (QEFFGLNNCSSSNRLDQ) the chain is Extracellular. A helical transmembrane segment spans residues 278 to 301 (AMQVTETLGMTHCCINPIIYAFVG). At 302–352 (EKFRNYLLVFFQKHIAKRFCKCCSIFQQEAPERASSVYTRSTGEQEISVGL) the chain is on the cytoplasmic side. S-palmitoyl cysteine attachment occurs at residues C321, C323, and C324. 4 positions are modified to phosphoserine; by BARK1: S336, S337, S342, and S349.

It belongs to the G-protein coupled receptor 1 family. As to quaternary structure, interacts with PRAF2. Efficient ligand binding to CCL3/MIP-1alpha and CCL4/MIP-1beta requires sulfation, O-glycosylation and sialic acid modifications. Glycosylation on Ser-6 is required for efficient binding of CCL4. Interacts with GRK2. Interacts with ARRB1 and ARRB2. Interacts with CNIH4. Interacts with S100A4; this interaction stimulates T-lymphocyte chemotaxis. Sulfated on at least 2 of the N-terminal tyrosines. Sulfation is required for efficient binding of the chemokines, CCL3 and CCL4. Post-translationally, palmitoylation in the C-terminal is important for cell surface expression. In terms of processing, phosphorylation on serine residues in the C-terminal is stimulated by binding CC chemokines especially by APO-RANTES. O-glycosylated, but not N-glycosylated. Ser-6 appears to be the major site even if Ser-7 may be also O-glycosylated. Also sialylated glycans present which contribute to chemokine binding. Thr-16 and Ser-17 may also be glycosylated and, if so, with small moieties such as a T-antigen.

It is found in the cell membrane. In terms of biological role, receptor for a number of inflammatory CC-chemokines including CCL3/MIP-1-alpha, CCL4/MIP-1-beta and RANTES and subsequently transduces a signal by increasing the intracellular calcium ion level. May play a role in the control of granulocytic lineage proliferation or differentiation. Participates in T-lymphocyte migration to the infection site by acting as a chemotactic receptor. The sequence is that of C-C chemokine receptor type 5 (CCR5) from Cercopithecus ascanius (Black-cheeked white-nosed monkey).